We begin with the raw amino-acid sequence, 592 residues long: Polyadenylate-binding protein, cytoplasmic and nuclear (592 aa).

Positions 1-10 are enriched in basic and acidic residues; sequence MSDITEKTAE. The tract at residues 1-43 is disordered; sequence MSDITEKTAEQLENLQINDDQQPAQSASAPSTSASESEASSVS. The segment covering 11–20 has biased composition (polar residues); it reads QLENLQINDD. Residues 21-43 are compositionally biased toward low complexity; the sequence is QQPAQSASAPSTSASESEASSVS. RRM domains follow at residues 50–128, 138–215, 231–308, and 334–411; these read ASLY…WSER, GNIF…MHVP, TNIY…RAQK, and VNLF…IAQR. The region spanning 507-586 is the PABC domain; that stretch reads NQFPRHQQQH…ALAAYENFKK (80 aa).

The protein belongs to the polyadenylate-binding protein type-1 family.

The protein resides in the cytoplasm. The protein localises to the nucleus. In terms of biological role, binds the poly(A) tail of mRNA. Appears to be an important mediator of the multiple roles of the poly(A) tail in mRNA biogenesis, stability and translation. In the nucleus, involved in both mRNA cleavage and polyadenylation. Is also required for efficient mRNA export to the cytoplasm. Acts in concert with a poly(A)-specific nuclease (PAN) to affect poly(A) tail shortening, which may occur concomitantly with either nucleocytoplasmic mRNA transport or translational initiation. In the cytoplasm, stimulates translation initiation and regulates mRNA decay through translation termination-coupled poly(A) shortening, probably mediated by PAN. This Kluyveromyces lactis (strain ATCC 8585 / CBS 2359 / DSM 70799 / NBRC 1267 / NRRL Y-1140 / WM37) (Yeast) protein is Polyadenylate-binding protein, cytoplasmic and nuclear (PAB1).